The primary structure comprises 359 residues: DNA integrity scanning protein DisA (359 aa).

Residues 10–148 (ELDLLDIVQF…GNRRYTLKDI (139 aa)) enclose the DAC domain. ATP is bound by residues G77, L95, and 108–112 (MRHRT).

It belongs to the DisA family. Homooctamer. Mg(2+) serves as cofactor.

It catalyses the reaction 2 ATP = 3',3'-c-di-AMP + 2 diphosphate. Functionally, participates in a DNA-damage check-point that is active prior to asymmetric division when DNA is damaged. DisA forms globular foci that rapidly scan along the chromosomes during sporulation, searching for lesions. When a lesion is present, DisA pauses at the lesion site. This triggers a cellular response that culminates in a temporary block in sporulation initiation. Its function is as follows. Also has diadenylate cyclase activity, catalyzing the condensation of 2 ATP molecules into cyclic di-AMP (c-di-AMP). c-di-AMP acts as a signaling molecule that couples DNA integrity with progression of sporulation. The rise in c-di-AMP level generated by DisA while scanning the chromosome, operates as a positive signal that advances sporulation; upon encountering a lesion, the DisA focus arrests at the damaged site and halts c-di-AMP synthesis. The polypeptide is DNA integrity scanning protein DisA (Bacillus pumilus (strain SAFR-032)).